The sequence spans 334 residues: Heat shock factor 2-binding protein (334 aa).

Residues M14–L51 form an interaction with BRME1 region. Residues E49–E122 adopt a coiled-coil conformation. The segment at A83–V334 is interaction with BRCA2.

In terms of assembly, associates with HSF2. The interaction seems to occur between the trimerization domain of HSF2 and the N-terminal hydrophilic region of HSF2BP. Interacts (via C-terminus) with BNC1. Interacts (via N-terminus) with BRCA2 and BRME1; the interactions are direct and allow the formation of a ternary complex. The complex BRME1:HSF2BP:BRCA2 interacts with SPATA22, MEIOB and RAD51. Post-translationally, sumoylated by UBE2I in response to MEKK1-mediated stimuli. In terms of tissue distribution, testis specific. Overexpressed in some tumors.

It localises to the cytoplasm. Its subcellular location is the chromosome. In terms of biological role, meiotic recombination factor component of recombination bridges involved in meiotic double-strand break repair. Modulates the localization of recombinases DMC1:RAD51 to meiotic double-strand break (DSB) sites through the interaction with BRCA2 and its recruitment during meiotic recombination. Indispensable for the DSB repair, homologous synapsis, and crossover formation that are needed for progression past metaphase I, is essential for spermatogenesis and male fertility. Required for proper recombinase recruitment in female meiosis. Inhibits BNC1 transcriptional activity during spermatogenesis, probably by sequestering it in the cytoplasm. May be involved in modulating HSF2 activation in testis. The protein is Heat shock factor 2-binding protein of Homo sapiens (Human).